The chain runs to 79 residues: Acyl carrier protein (79 aa).

The region spanning 3-78 (QEILEKVRSI…DAVSYIQEKK (76 aa)) is the Carrier domain. An O-(pantetheine 4'-phosphoryl)serine modification is found at Ser-38.

Belongs to the acyl carrier protein (ACP) family. In terms of processing, 4'-phosphopantetheine is transferred from CoA to a specific serine of apo-ACP by AcpS. This modification is essential for activity because fatty acids are bound in thioester linkage to the sulfhydryl of the prosthetic group.

Its subcellular location is the cytoplasm. The protein operates within lipid metabolism; fatty acid biosynthesis. Its function is as follows. Carrier of the growing fatty acid chain in fatty acid biosynthesis. This chain is Acyl carrier protein, found in Synechococcus sp. (strain RCC307).